Reading from the N-terminus, the 424-residue chain is Virion nicking-joining enzyme (424 aa).

PLD phosphodiesterase domains are found at residues 110–137 and 320–346; these read LGGVLHTKFWISDNTHIYLGSANMDWRS and YSRVNHAKYMVTDKTAYIGTSNWTGNY.

It belongs to the orthopoxvirus OPG042 family.

The protein resides in the virion. Its function is as follows. DNA nicking enzyme that cleaves extruded cruciform DNA at its tip. Probably nicks viral hairpins. This is Virion nicking-joining enzyme (OPG042) from Homo sapiens (Human).